A 318-amino-acid polypeptide reads, in one-letter code: Malonyl-S-ACP:biotin-protein carboxyltransferase MADC (318 aa).

A CoA carboxyltransferase N-terminal domain is found at 2–257 (AKWTELQDKS…VLQKPMEEIE (256 aa)).

Its subcellular location is the cytoplasm. The catalysed reaction is N(6)-biotinyl-L-lysyl-[protein] + malonyl-[ACP] = N(6)-carboxybiotinyl-L-lysyl-[protein] + acetyl-[ACP]. In terms of biological role, gamma subunit of the biotin-dependent malonate decarboxylase multienzyme complex (EC 7.2.4.4). The two subunits MADC and MADD are required for the transfer of the malonate carboxy group from the acyl-carrier protein (ACP) to the prosthetic group of the biotin carrier MADF. Required for the regeneration of ACP. This is Malonyl-S-ACP:biotin-protein carboxyltransferase MADC (madC) from Malonomonas rubra.